Here is a 112-residue protein sequence, read N- to C-terminus: MFKILLVCSLAALVAANANVEVKELVNDVQPDGFVSKLVLDDGSASSATGDIHGNIDGVFEWISPEGVHVRVSYKADENGYQPQSDLLPTPPPIPAAILKAIAYIEANPSKN.

Positions 1–16 (MFKILLVCSLAALVAA) are cleaved as a signal peptide. The 62-residue stretch at 31–92 (PDGFVSKLVL…PQSDLLPTPP (62 aa)) folds into the Chitin-binding type R&amp;R domain.

Its function is as follows. Component of the larval cuticle. This Drosophila melanogaster (Fruit fly) protein is Larval cuticle protein 3 (Lcp3).